The following is a 303-amino-acid chain: MVDPQLDGPQLAALAAVVELGSFDAAAERLHVTPSAVSQRIKSLEQQVGQVLVVREKPCRATTAGIPLLRLAAQTALLESEALAEMGGNASLKRTRITIAVNADSMATWFSAVFDGLGDVLLDVRIEDQDHSARLLREGVAMGAVTTERNPVPGCRVHPLGEMRYLPVASRPFVQRHLSDGFTAAAAAKAPSLAWNRDDGLQDMLVRKAFRRAITRPTHFVPTTEGFTAAARAGLGWGMFPEKLAASPLADGSFVRVCDIHLDVPLYWQCWKLDSPIIARITDTVRAAASGLYRGQQRRRRPG.

The HTH lysR-type domain maps to 6-62 (LDGPQLAALAAVVELGSFDAAAERLHVTPSAVSQRIKSLEQQVGQVLVVREKPCRAT). Positions 23 to 42 (FDAAAERLHVTPSAVSQRIK) form a DNA-binding region, H-T-H motif.

Belongs to the LysR transcriptional regulatory family. In terms of assembly, homodimer.

Positively regulates the expression of the exporter LysE and represses its own expression. In Mycobacterium bovis (strain ATCC BAA-935 / AF2122/97), this protein is HTH-type transcriptional regulator LysG.